The following is a 357-amino-acid chain: MADAAVIEKLEEGFKKLEAATDCKSLLKKYLTKSVFDQLKGKKTSLGATLLDVIQSGVENLDSGVGVYAPDAEAYTLFAPLFDPIIEDYHKGFKQTDKHPNKDFGDVNQFVNVDPDGKFVISTRVRCGRSMEGYPFNPCLTEAQYKEMESKVSSTLSNLEGELKGTYYPLTGMTKDVQQKLIDDHFLFKEGDRFLQAANACRYWPTGRGIYHNDNKTFLVWCNEEDHLRIISMQMGGDLGQVYRRLVSAVNEIEKRVPFSHHDRLGFLTFCPTNLGTTVRASVHIKLPKLAANREKLEEVAGKYSLQVRGTRGEHTEAEGGVYDISNKRRMGLTEFQAVKEMQDGILELIKIEKEMQ.

The 83-residue stretch at 9 to 91 (KLEEGFKKLE…FDPIIEDYHK (83 aa)) folds into the Phosphagen kinase N-terminal domain. Position 64–68 (64–68 (GVGVY)) interacts with L-arginine. IgE-binding and beta-hexosaminidase release from rat basophilic leukemia (RBL) cells regions lie at residues 113–127 (VDPD…RVRC) and 127–155 (CGRS…VSST). One can recognise a Phosphagen kinase C-terminal domain in the interval 119–356 (FVISTRVRCG…LELIKIEKEM (238 aa)). 122–126 (STRVR) contributes to the ATP binding site. His185 is an ATP binding site. Cysteines 201 and 271 form a disulfide. Positions 204–218 (WPTGRGIYHNDNKTF) are igE-binding and beta-hexosaminidase release from rat basophilic leukemia (RBL) cells. Positions 211–225 (YHNDNKTFLVWCNEE) are igE-binding, but no beta-hexosaminidase release from rat basophilic leukemia (RBL) cells. Glu225 contacts L-arginine. Arg229 contributes to the ATP binding site. Cys271 contacts L-arginine. ATP contacts are provided by residues 280–284 (RASVH) and 309–314 (RGTRGE). Residue Glu314 participates in L-arginine binding. An igE-binding, but no beta-hexosaminidase release from rat basophilic leukemia (RBL) cells region spans residues 316–330 (TEAEGGVYDISNKRR).

It belongs to the ATP:guanido phosphotransferase family. In terms of processing, glycosylated. In terms of tissue distribution, muscle (at protein level).

The catalysed reaction is L-arginine + ATP = N(omega)-phospho-L-arginine + ADP + H(+). In terms of biological role, catalyzes the reversible transfer of high energy ATP gamma-phosphate group to L-arginine. The chain is Arginine kinase Scy p 2.0101 from Scylla paramamosain (Mud crab).